The sequence spans 149 residues: Large ribosomal subunit protein uL22 (149 aa).

It belongs to the universal ribosomal protein uL22 family. As to quaternary structure, part of the 50S ribosomal subunit.

Functionally, this protein binds specifically to 23S rRNA; its binding is stimulated by other ribosomal proteins, e.g. L4, L17, and L20. It is important during the early stages of 50S assembly. It makes multiple contacts with different domains of the 23S rRNA in the assembled 50S subunit and ribosome. In terms of biological role, the globular domain of the protein is located near the polypeptide exit tunnel on the outside of the subunit, while an extended beta-hairpin is found that lines the wall of the exit tunnel in the center of the 70S ribosome. The polypeptide is Large ribosomal subunit protein uL22 (Petrotoga mobilis (strain DSM 10674 / SJ95)).